Reading from the N-terminus, the 736-residue chain is Copper-exporting P-type ATPase (736 aa).

Positions 1-17 (MKHDHHQGHTHSGKGHA) are enriched in basic residues. Residues 1–32 (MKHDHHQGHTHSGKGHACHHEHNSPKTQQASS) are disordered. 6 helical membrane-spanning segments follow: residues 85–105 (FWIA…GHGL), 114–134 (SSWI…WPFF), 149–169 (FTLI…AVLW), 183–203 (VVAV…LGQV), 341–361 (GWFV…WALL), and 369–389 (YGLI…LGLA). Catalysis depends on D426, which acts as the 4-aspartylphosphate intermediate. Positions 426, 428, and 624 each coordinate Mg(2+). Helical transmembrane passes span 682–702 (LFFA…VLYP) and 706–726 (LLLS…SVII).

Belongs to the cation transport ATPase (P-type) (TC 3.A.3) family. Type IB subfamily. Requires Mg(2+) as cofactor.

Its subcellular location is the cell inner membrane. The catalysed reaction is Cu(+)(in) + ATP + H2O = Cu(+)(out) + ADP + phosphate + H(+). With respect to regulation, activated by phospholipids, Mg(2+) and Cu(+). Functionally, couples the hydrolysis of ATP with the export of copper. In Legionella pneumophila subsp. pneumophila (strain Philadelphia 1 / ATCC 33152 / DSM 7513), this protein is Copper-exporting P-type ATPase.